Here is a 711-residue protein sequence, read N- to C-terminus: C6 finger domain transcription factor nscR (711 aa).

Residues 17–43 constitute a DNA-binding region (zn(2)-C6 fungal-type); sequence CELCRERKVKCDKLDPCTNCSSAGVIC. A disordered region spans residues 372-394; it reads SPPKHINDSDFDPTTSHDVPDRE.

It is found in the nucleus. Functionally, transcription factor that specifically regulates the neosartoricin B biosynthesis gene cluster. In Trichophyton tonsurans (strain CBS 112818) (Scalp ringworm fungus), this protein is C6 finger domain transcription factor nscR.